The chain runs to 777 residues: Ribosome-releasing factor 2, mitochondrial (777 aa).

One can recognise a tr-type G domain in the interval 68 to 353 (AKIRNIGIMA…AVTMYLPSPE (286 aa)). Residues 77–84 (AHIDAGKT), 141–145 (DTPGH), and 195–198 (NKMD) contribute to the GTP site.

Belongs to the TRAFAC class translation factor GTPase superfamily. Classic translation factor GTPase family. EF-G/EF-2 subfamily.

Its subcellular location is the mitochondrion. The catalysed reaction is GTP + H2O = GDP + phosphate + H(+). Functionally, mitochondrial GTPase that mediates the disassembly of ribosomes from messenger RNA at the termination of mitochondrial protein biosynthesis. Acts in collaboration with MRRF. GTP hydrolysis follows the ribosome disassembly and probably occurs on the ribosome large subunit. Not involved in the GTP-dependent ribosomal translocation step during translation elongation. This Pongo abelii (Sumatran orangutan) protein is Ribosome-releasing factor 2, mitochondrial.